Here is a 419-residue protein sequence, read N- to C-terminus: Zinc finger protein Pegasus (419 aa).

A Glycyl lysine isopeptide (Lys-Gly) (interchain with G-Cter in SUMO2) cross-link involves residue Lys5. C2H2-type zinc fingers lie at residues 82 to 104 (LKCR…IRIH), 110 to 132 (HRCH…MRSH), and 138 to 161 (YKCE…RRKH). A Glycyl lysine isopeptide (Lys-Gly) (interchain with G-Cter in SUMO2) cross-link involves residue Lys185. Polar residues-rich tracts occupy residues 223–236 (QTDS…TTPT) and 262–273 (LSSLPPENQNPA). Disordered stretches follow at residues 223-247 (QTDS…QELM) and 262-356 (LSSL…PALP). Positions 290 to 311 (QPSTQAVVSAVSASIPQSSSPT) are enriched in low complexity. Over residues 332-349 (SEPSAHTSTPSIGNSQPS) the composition is skewed to polar residues. 2 C2H2-type zinc fingers span residues 364–386 (HHCQ…MGCH) and 392–416 (FQCN…RGQH).

Belongs to the Ikaros C2H2-type zinc-finger protein family. Self-associates. Interacts with other family members; IKZF1, IKZF2, IKZF3 and IKZF4. Expressed in brain, heart, skeletal muscle, kidney, and liver. Expressed in the hematopoietic cell lines MOLT-4, NALM-6 and K-562. Highly expressed in THP-1 and M-07e cell lines, which have characteristics of myeloid and early megakaryocytic cells respectively.

The protein localises to the nucleus. Its function is as follows. Transcriptional repressor that binds the core 5'GNNTGTNG-3' DNA consensus sequence. Involved in megakaryocyte differentiation. The chain is Zinc finger protein Pegasus (IKZF5) from Homo sapiens (Human).